The primary structure comprises 2075 residues: Autophagy-related protein 2 homolog B (2075 aa).

Residues Ala13–Arg107 form the Chorein N-terminal domain. Residues Ser255, Ser379, Ser496, Ser839, Ser885, Ser898, and Ser1007 each carry the phosphoserine modification. Tyr1011 is subject to Phosphotyrosine. 2 positions are modified to phosphoserine: Ser1015 and Ser1017. Thr1021 is subject to Phosphothreonine. Residues Lys1373–Ala1403 are disordered. Position 1525 is a phosphoserine (Ser1525). Disordered stretches follow at residues Thr1570–Thr1593, Glu1759–Ser1792, and Arg2055–Asp2075. A compositionally biased stretch (polar residues) spans Pro1578–Thr1587. Basic and acidic residues predominate over residues Ile2058–Asp2075.

It belongs to the ATG2 family. Interacts with WDR45/WIPI4.

It is found in the preautophagosomal structure membrane. Its subcellular location is the lipid droplet. The protein localises to the endoplasmic reticulum membrane. It carries out the reaction a 1,2-diacyl-sn-glycero-3-phospho-L-serine(in) = a 1,2-diacyl-sn-glycero-3-phospho-L-serine(out). The enzyme catalyses a 1,2-diacyl-sn-glycero-3-phosphoethanolamine(in) = a 1,2-diacyl-sn-glycero-3-phosphoethanolamine(out). Lipid transfer protein required for both autophagosome formation and regulation of lipid droplet morphology and dispersion. Tethers the edge of the isolation membrane (IM) to the endoplasmic reticulum (ER) and mediates direct lipid transfer from ER to IM for IM expansion. Binds to the ER exit site (ERES), which is the membrane source for autophagosome formation, and extracts phospholipids from the membrane source and transfers them to ATG9 (ATG9A or ATG9B) to the IM for membrane expansion. Lipid transfer activity is enhanced by WDR45/WIPI4, which promotes ATG2B-association with phosphatidylinositol 3-monophosphate (PI3P)-containing membranes. This Mus musculus (Mouse) protein is Autophagy-related protein 2 homolog B.